The chain runs to 92 residues: DNA-directed RNA polymerase subunit Rpo11 (92 aa).

Belongs to the archaeal Rpo11/eukaryotic RPB11/RPC19 RNA polymerase subunit family. Part of the RNA polymerase complex.

Its subcellular location is the cytoplasm. The enzyme catalyses RNA(n) + a ribonucleoside 5'-triphosphate = RNA(n+1) + diphosphate. Functionally, DNA-dependent RNA polymerase (RNAP) catalyzes the transcription of DNA into RNA using the four ribonucleoside triphosphates as substrates. In Pyrobaculum aerophilum (strain ATCC 51768 / DSM 7523 / JCM 9630 / CIP 104966 / NBRC 100827 / IM2), this protein is DNA-directed RNA polymerase subunit Rpo11.